The primary structure comprises 702 residues: Lipase maturation factor 2 (702 aa).

Helical transmembrane passes span 10-30 (LFLQGVAAVYLFAFASLYTQI), 75-95 (AQGLDLLTLLGTVLALGALLL), 164-184 (DLPFWLVRWLLFRLMFASGVV), 226-246 (LSVVATFLIEIAVPPLFFAPI), 259-279 (LLQVLIIITGNYNFFNLLTLV), 316-336 (LLLELTVYGLLAYGTVYYFGL), 363-383 (VTLPTVWLGTASLAWELLVVL), and 398-418 (AGIQLSVLGTATVALFLISLV). Asn-488 carries N-linked (GlcNAc...) asparagine glycosylation. A helical membrane pass occupies residues 636–656 (ILLWGLFGAVVAIRVVQTLLA). Positions 660–702 (LQSSKQTREEKRKQTSKKDSRAASEQAAANSNSRDSWAPRRKK) are disordered. The segment covering 665-681 (QTREEKRKQTSKKDSRA) has biased composition (basic and acidic residues). Low complexity predominate over residues 682–693 (ASEQAAANSNSR).

The protein belongs to the lipase maturation factor family.

It is found in the endoplasmic reticulum membrane. Its function is as follows. Involved in the maturation of specific proteins in the endoplasmic reticulum. May be required for maturation and transport of active lipoprotein lipase (LPL) through the secretory pathway. This chain is Lipase maturation factor 2 (Lmf2), found in Mus musculus (Mouse).